The primary structure comprises 458 residues: Bifunctional protein GlmU (458 aa).

Residues 1-230 form a pyrophosphorylase region; that stretch reads MENRYAIILA…FDEAMGVNDR (230 aa). Residues 9-12, K23, Q73, and 78-79 each bind UDP-N-acetyl-alpha-D-glucosamine; these read LAAG and GT. D103 provides a ligand contact to Mg(2+). The UDP-N-acetyl-alpha-D-glucosamine site is built by G140, E155, N170, and N228. N228 lines the Mg(2+) pocket. The linker stretch occupies residues 231 to 251; it reads VALSTANKIMHRRLNEMHMRN. Residues 252–458 are N-acetyltransferase; that stretch reads GVTFIDPDTT…YAKKLPYMKD (207 aa). 2 residues coordinate UDP-N-acetyl-alpha-D-glucosamine: R333 and K351. The Proton acceptor role is filled by H363. 2 residues coordinate UDP-N-acetyl-alpha-D-glucosamine: Y366 and N377. Residues 386-387, S405, A423, and R440 each bind acetyl-CoA; that span reads NY.

This sequence in the N-terminal section; belongs to the N-acetylglucosamine-1-phosphate uridyltransferase family. The protein in the C-terminal section; belongs to the transferase hexapeptide repeat family. Homotrimer. Mg(2+) serves as cofactor.

Its subcellular location is the cytoplasm. The catalysed reaction is alpha-D-glucosamine 1-phosphate + acetyl-CoA = N-acetyl-alpha-D-glucosamine 1-phosphate + CoA + H(+). The enzyme catalyses N-acetyl-alpha-D-glucosamine 1-phosphate + UTP + H(+) = UDP-N-acetyl-alpha-D-glucosamine + diphosphate. It participates in nucleotide-sugar biosynthesis; UDP-N-acetyl-alpha-D-glucosamine biosynthesis; N-acetyl-alpha-D-glucosamine 1-phosphate from alpha-D-glucosamine 6-phosphate (route II): step 2/2. The protein operates within nucleotide-sugar biosynthesis; UDP-N-acetyl-alpha-D-glucosamine biosynthesis; UDP-N-acetyl-alpha-D-glucosamine from N-acetyl-alpha-D-glucosamine 1-phosphate: step 1/1. Its pathway is bacterial outer membrane biogenesis; LPS lipid A biosynthesis. Its function is as follows. Catalyzes the last two sequential reactions in the de novo biosynthetic pathway for UDP-N-acetylglucosamine (UDP-GlcNAc). The C-terminal domain catalyzes the transfer of acetyl group from acetyl coenzyme A to glucosamine-1-phosphate (GlcN-1-P) to produce N-acetylglucosamine-1-phosphate (GlcNAc-1-P), which is converted into UDP-GlcNAc by the transfer of uridine 5-monophosphate (from uridine 5-triphosphate), a reaction catalyzed by the N-terminal domain. The polypeptide is Bifunctional protein GlmU (Enterococcus faecalis (strain ATCC 700802 / V583)).